Reading from the N-terminus, the 209-residue chain is Large ribosomal subunit protein bL25 (209 aa).

Positions 190-209 (PDASAAPVAAPAAPAKKGKK) are disordered.

It belongs to the bacterial ribosomal protein bL25 family. CTC subfamily. Part of the 50S ribosomal subunit; part of the 5S rRNA/L5/L18/L25 subcomplex. Contacts the 5S rRNA. Binds to the 5S rRNA independently of L5 and L18.

Its function is as follows. This is one of the proteins that binds to the 5S RNA in the ribosome where it forms part of the central protuberance. This is Large ribosomal subunit protein bL25 from Delftia acidovorans (strain DSM 14801 / SPH-1).